The chain runs to 243 residues: Secreted RxLR effector protein 28 (243 aa).

The signal sequence occupies residues 1–26; sequence MHVSRIIAHIALATAITATTVSPTDA. Positions 49-52 match the RxLR motif; sequence RGLR. Residues 187-243 are disordered; it reads NVDEDKGQNFGHSVSGPPTTTLTGPHTKSGIPPFENLVAPAKGSMPNTRRNGYQFFE. The segment covering 199-216 has biased composition (low complexity); it reads SVSGPPTTTLTGPHTKSG.

Belongs to the RxLR effector family.

Its subcellular location is the secreted. It localises to the host cytoplasm. It is found in the host nucleus. Functionally, effector that significantly enhances susceptibilities of grapevine and tobacco to pathogens. Acts as a broad suppressor of cell death to interrupt plant immunity. Completely inhibits cell death induced by cell death-inducing proteins, including the PAMP elicitor INF1 from P.infestans. Reduces the transcriptional levels of the defense-related genes and impairs the H(2)O(2) accumulation in N.benthamiana. In Plasmopara viticola (Downy mildew of grapevine), this protein is Secreted RxLR effector protein 28.